The chain runs to 204 residues: Peroxynitrite isomerase (204 aa).

The GXWXGXG signature appears at 21-27 (GEWEGSG). A heme b-binding site is contributed by histidine 195.

Belongs to the nitrobindin family. As to quaternary structure, homodimer. The cofactor is heme b.

It carries out the reaction peroxynitrite = nitrate. The protein operates within nitrogen metabolism. In terms of biological role, heme-binding protein able to scavenge peroxynitrite and to protect free L-tyrosine against peroxynitrite-mediated nitration, by acting as a peroxynitrite isomerase that converts peroxynitrite to nitrate. Therefore, this protein likely plays a role in peroxynitrite sensing and in the detoxification of reactive nitrogen and oxygen species (RNS and ROS, respectively). Is able to bind nitric oxide (NO) in vitro, but may act as a sensor of peroxynitrite levels in vivo. This chain is Peroxynitrite isomerase, found in Arthrobacter sp. (strain FB24).